A 60-amino-acid chain; its full sequence is UPF0291 protein CTC_01690.1 (60 aa).

This sequence belongs to the UPF0291 family.

Its subcellular location is the cytoplasm. The polypeptide is UPF0291 protein CTC_01690.1 (Clostridium tetani (strain Massachusetts / E88)).